Reading from the N-terminus, the 215-residue chain is Large ribosomal subunit protein uL4c (215 aa).

Residues 51–87 (QKQGTVSTKTRSEVRGGGKKPWRQKGTGRARAGSSRS) form a disordered region. A compositionally biased stretch (basic residues) spans 67 to 78 (GGKKPWRQKGTG).

It belongs to the universal ribosomal protein uL4 family. Part of the 50S ribosomal subunit.

Its subcellular location is the plastid. The protein localises to the chloroplast. Probably binds the 23S rRNA. The polypeptide is Large ribosomal subunit protein uL4c (rpl4) (Thalassiosira pseudonana (Marine diatom)).